The chain runs to 444 residues: Phosphoglucosamine mutase (444 aa).

Residue serine 102 is the Phosphoserine intermediate of the active site. Mg(2+) is bound by residues serine 102, aspartate 241, aspartate 243, and aspartate 245. Phosphoserine is present on serine 102.

This sequence belongs to the phosphohexose mutase family. Mg(2+) is required as a cofactor. In terms of processing, activated by phosphorylation.

It catalyses the reaction alpha-D-glucosamine 1-phosphate = D-glucosamine 6-phosphate. Its function is as follows. Catalyzes the conversion of glucosamine-6-phosphate to glucosamine-1-phosphate. The sequence is that of Phosphoglucosamine mutase from Acidovorax ebreus (strain TPSY) (Diaphorobacter sp. (strain TPSY)).